The sequence spans 89 residues: MKKGIHPEYRPVVFRDAGADFAFLTRSTVETNKTIEWEDGNTYPLVELDISSASHPFYTGRQRIVDTGGRVQRFESRRRRRQQQSGEQG.

The tract at residues 70–89 (RVQRFESRRRRRQQQSGEQG) is disordered.

Belongs to the bacterial ribosomal protein bL31 family. Type B subfamily. As to quaternary structure, part of the 50S ribosomal subunit.

The protein is Large ribosomal subunit protein bL31B of Rubrobacter xylanophilus (strain DSM 9941 / JCM 11954 / NBRC 16129 / PRD-1).